Reading from the N-terminus, the 332-residue chain is UBA domain-containing protein Mud1 (332 aa).

Aspartate 127 is an active-site residue. The interval 246–298 (GLGIEPASKASASSPNPQSGTRLGTKESVAPNNEGSSNPPSLVNPPTDPGLNS) is disordered. Low complexity predominate over residues 251 to 264 (PASKASASSPNPQS). The segment covering 275 to 286 (APNNEGSSNPPS) has biased composition (polar residues). The 42-residue stretch at 291 to 332 (PTDPGLNSKIAQLVSMGFDPLEAAQALDAANGDLDVAASFLL) folds into the UBA domain.

This sequence belongs to the DDI1 family. Homodimer. Interacts (via UBA domain) with polyubiquitin (polyUb) chains (via Lys-48-linked polyUbs). Has weak binding affinity for monoubiquitin. According to another report, has no affinity for monoubiquitin.

It is found in the cytoplasm. Its subcellular location is the cell membrane. In terms of biological role, recognizes and binds polyubiquitin chains. Acts as a linker between the 19S proteasome and polyubiquitinated proteins via UBA domain interactions with ubiquitin for their subsequent degradation. Aspartic protease. Appears to act as negative regulator of constitutive exocytosis. May act at the level of secretory vesicle docking and fusion as a competitive inhibitor of SNARE assembly. Required for S-phase checkpoint control. In Schizosaccharomyces pombe (strain 972 / ATCC 24843) (Fission yeast), this protein is UBA domain-containing protein Mud1.